Consider the following 118-residue polypeptide: Ribosome-binding factor A (118 aa).

It belongs to the RbfA family. As to quaternary structure, monomer. Binds 30S ribosomal subunits, but not 50S ribosomal subunits or 70S ribosomes.

The protein localises to the cytoplasm. Functionally, one of several proteins that assist in the late maturation steps of the functional core of the 30S ribosomal subunit. Associates with free 30S ribosomal subunits (but not with 30S subunits that are part of 70S ribosomes or polysomes). Required for efficient processing of 16S rRNA. May interact with the 5'-terminal helix region of 16S rRNA. The polypeptide is Ribosome-binding factor A (Thermodesulfovibrio yellowstonii (strain ATCC 51303 / DSM 11347 / YP87)).